The sequence spans 456 residues: 3-isopropylmalate dehydratase large subunit (456 aa).

Residues Cys336, Cys396, and Cys399 each contribute to the [4Fe-4S] cluster site.

Belongs to the aconitase/IPM isomerase family. LeuC type 1 subfamily. In terms of assembly, heterodimer of LeuC and LeuD. Requires [4Fe-4S] cluster as cofactor.

It catalyses the reaction (2R,3S)-3-isopropylmalate = (2S)-2-isopropylmalate. The protein operates within amino-acid biosynthesis; L-leucine biosynthesis; L-leucine from 3-methyl-2-oxobutanoate: step 2/4. In terms of biological role, catalyzes the isomerization between 2-isopropylmalate and 3-isopropylmalate, via the formation of 2-isopropylmaleate. The sequence is that of 3-isopropylmalate dehydratase large subunit from Staphylococcus epidermidis (strain ATCC 12228 / FDA PCI 1200).